The sequence spans 271 residues: Bifunctional protein FolD (271 aa).

NADP(+) is bound by residues 154 to 156 (GRS), Ser181, and Ile222.

This sequence belongs to the tetrahydrofolate dehydrogenase/cyclohydrolase family. In terms of assembly, homodimer.

The catalysed reaction is (6R)-5,10-methylene-5,6,7,8-tetrahydrofolate + NADP(+) = (6R)-5,10-methenyltetrahydrofolate + NADPH. It catalyses the reaction (6R)-5,10-methenyltetrahydrofolate + H2O = (6R)-10-formyltetrahydrofolate + H(+). It functions in the pathway one-carbon metabolism; tetrahydrofolate interconversion. In terms of biological role, catalyzes the oxidation of 5,10-methylenetetrahydrofolate to 5,10-methenyltetrahydrofolate and then the hydrolysis of 5,10-methenyltetrahydrofolate to 10-formyltetrahydrofolate. This is Bifunctional protein FolD from Thermotoga petrophila (strain ATCC BAA-488 / DSM 13995 / JCM 10881 / RKU-1).